The following is a 298-amino-acid chain: Ribosomal protein L11 methyltransferase (298 aa).

Residues threonine 152, glycine 173, aspartate 195, and asparagine 234 each contribute to the S-adenosyl-L-methionine site.

It belongs to the methyltransferase superfamily. PrmA family.

It localises to the cytoplasm. It catalyses the reaction L-lysyl-[protein] + 3 S-adenosyl-L-methionine = N(6),N(6),N(6)-trimethyl-L-lysyl-[protein] + 3 S-adenosyl-L-homocysteine + 3 H(+). Its function is as follows. Methylates ribosomal protein L11. The polypeptide is Ribosomal protein L11 methyltransferase (Ralstonia pickettii (strain 12J)).